The following is a 742-amino-acid chain: Synaptic vesicle glycoprotein 2A (742 aa).

The interval 1 to 57 is interaction with SYT1; sequence MEEGFRDRAAFIRGAKDIAKEVKKHAAKKVVKGLDRVQDEYSRRSYSRFEEEDDDDD. Residues 1–169 lie on the Cytoplasmic side of the membrane; that stretch reads MEEGFRDRAA…GHGRFQWTLY (169 aa). Over residues 33–49 the composition is skewed to basic and acidic residues; the sequence is GLDRVQDEYSRRSYSRF. The tract at residues 33 to 144 is disordered; it reads GLDRVQDEYS…GRGEAQRRKE (112 aa). Phosphoserine is present on residues serine 80 and serine 81. The residue at position 84 (threonine 84) is a Phosphothreonine. A compositionally biased stretch (gly residues) spans 122–137; that stretch reads VRGGLSDGEGPPGGRG. Position 127 is a phosphoserine (serine 127). The helical transmembrane segment at 170 to 190 threads the bilayer; that stretch reads FVLGLALMADGVEVFVVGFVL. Residues 191–205 lie on the Extracellular side of the membrane; the sequence is PSAEKDMCLSDSNKG. Residues 206–226 traverse the membrane as a helical segment; it reads MLGLIVYLGMMVGAFLWGGLA. The Cytoplasmic segment spans residues 227–233; it reads DRLGRRQ. Residues 234-254 form a helical membrane-spanning segment; it reads CLLISLSVNSVFAFFSSFVQG. Over 255 to 262 the chain is Extracellular; that stretch reads YGTFLFCR. A helical membrane pass occupies residues 263–283; that stretch reads LLSGVGIGGSIPIVFSYFSEF. Residues 284–294 are Cytoplasmic-facing; the sequence is LAQEKRGEHLS. A helical membrane pass occupies residues 295–315; it reads WLCMFWMIGGVYAAAMAWAII. Residues 316-334 are Extracellular-facing; sequence PHYGWSFQMGSAYQFHSWR. Residues 335–355 form a helical membrane-spanning segment; that stretch reads VFVLVCAFPSVFAIGALTTQP. Topologically, residues 356–447 are cytoplasmic; sequence ESPRFFLENG…CFGPEYRRIT (92 aa). Serine 393 is modified (phosphoserine). Residues 448–468 form a helical membrane-spanning segment; it reads LMMMGVWFTMSFSYYGLTVWF. Over 469 to 598 the chain is Extracellular; sequence PDMIRHLQAV…GTGEGAYMVY (130 aa). Tyrosine 480 carries the phosphotyrosine modification. Residues asparagine 498, asparagine 548, and asparagine 573 are each glycosylated (N-linked (GlcNAc...) asparagine). The chain crosses the membrane as a helical span at residues 599–619; sequence FVSFLGTLAVLPGNIVSALLM. Residues 620-626 are Cytoplasmic-facing; sequence DKIGRLR. The chain crosses the membrane as a helical span at residues 627-647; sequence MLAGSSVMSCVSCFFLSFGNS. At 648-651 the chain is on the extracellular side; that stretch reads ESAM. Residues 652–672 form a helical membrane-spanning segment; that stretch reads IALLCLFGGVSIASWNALDVL. The Cytoplasmic portion of the chain corresponds to 673-690; that stretch reads TVGLYPSDKRTTAFGFLN. A helical transmembrane segment spans residues 691–711; that stretch reads ALCKLAAVLGISIFTSFVGIT. Position 712 (lysine 712) is a topological domain, extracellular. A helical transmembrane segment spans residues 713–733; the sequence is AAPIPFASAALALGSSLALKL. Residues 734–742 are Cytoplasmic-facing; it reads PETRGQVLQ.

It belongs to the major facilitator superfamily. In terms of assembly, interacts with SYT1/synaptotagmin-1 in a calcium-dependent manner. Binds the adapter protein complex AP-2. Post-translationally, phosphorylation by CK1 of the N-terminal cytoplasmic domain regulates interaction with SYT1. In terms of processing, N-glycosylated.

The protein localises to the presynapse. It localises to the cytoplasmic vesicle. It is found in the secretory vesicle. The protein resides in the synaptic vesicle membrane. Functionally, plays a role in the control of regulated secretion in neural and endocrine cells, enhancing selectively low-frequency neurotransmission. Positively regulates vesicle fusion by maintaining the readily releasable pool of secretory vesicles. The chain is Synaptic vesicle glycoprotein 2A (SV2A) from Macaca fascicularis (Crab-eating macaque).